The primary structure comprises 488 residues: MTDRRNLTTNQGVPIGDNQNSMTAGLKGPTLLEDYVLIEKLAHFDRERVPERVVHARGAGAHGKFVTKKSMKKYTKAQFLQEEGTETEVFARFSTVIHGQHSPETLRDPRGFSVKFYTEEGNYDFVGNNLPVFFIRDAIKFPDVIHSLKPDPRTNIQDGNRYWDFFSLTPEATTMITYLFSDEGTPASYREIRGSSVHAFKWINEEGKTVYVKLRWVPKAGIVNLSTDQAAQIQAKEFNHASRDLYEAIENGDYPEWDLYVQVLDPKDLDNYDFNPLDATKDWFEDVFPYEHVGTMTLNRNPDNIFAETESVGFNPGVLVPGMLPSEDRVLQGRLFSYSDTQRHRVGPNYLQLPINSPKTPVDNNQRDGQMPFKQQTSSINYEPNSYDTEPKENPAYIEPEQEIRGDISGRLVAEKPNNFGHAKEVWKRYSDAERAALVKNIVDDWEGVREDIKIRNLRNFYQVEPEFAERVAAGTGINLAEHVIDLK.

A disordered region spans residues 1-24; sequence MTDRRNLTTNQGVPIGDNQNSMTA. Residues 7 to 23 are compositionally biased toward polar residues; the sequence is LTTNQGVPIGDNQNSMT. Residues His-55 and Asn-128 contribute to the active site. A heme-binding site is contributed by Tyr-338.

The protein belongs to the catalase family. Heme is required as a cofactor.

The protein localises to the cytoplasm. It carries out the reaction 2 H2O2 = O2 + 2 H2O. Its function is as follows. Decomposes hydrogen peroxide into water and oxygen; serves to protect cells from the toxic effects of hydrogen peroxide. The protein is Catalase (kat) of Listeria seeligeri.